Reading from the N-terminus, the 428-residue chain is Dihydroorotase (428 aa).

The Zn(2+) site is built by histidine 59 and histidine 61. Substrate is bound by residues 61–63 (HLR) and asparagine 93. The Zn(2+) site is built by aspartate 151, histidine 178, and histidine 231. Substrate is bound at residue asparagine 277. A Zn(2+)-binding site is contributed by aspartate 304. The active site involves aspartate 304. Substrate-binding positions include histidine 308 and 322–323 (FG).

Belongs to the metallo-dependent hydrolases superfamily. DHOase family. Class I DHOase subfamily. It depends on Zn(2+) as a cofactor.

The enzyme catalyses (S)-dihydroorotate + H2O = N-carbamoyl-L-aspartate + H(+). It participates in pyrimidine metabolism; UMP biosynthesis via de novo pathway; (S)-dihydroorotate from bicarbonate: step 3/3. Its function is as follows. Catalyzes the reversible cyclization of carbamoyl aspartate to dihydroorotate. This Bacillus cereus (strain G9842) protein is Dihydroorotase.